Here is a 356-residue protein sequence, read N- to C-terminus: Guanine nucleotide-binding protein alpha-17 subunit (356 aa).

Gly2 carries the N-myristoyl glycine lipid modification. Cys4 is lipidated: S-palmitoyl cysteine. The region spanning Ser32–Met356 is the G-alpha domain. Residues Lys35–Thr48 form a G1 motif region. Residues Gly40 to Ser47, Leu177 to Thr183, Asp202 to Gln206, Asn271 to Asp274, and Ala328 contribute to the GTP site. The Mg(2+) site is built by Ser47 and Thr183. The interval Asp175–Thr183 is G2 motif. Residues Phe198 to Arg207 form a G3 motif region. The interval Ile267–Asp274 is G4 motif. The tract at residues Thr326 to Thr331 is G5 motif.

It belongs to the G-alpha family. G proteins are composed of 3 units; alpha, beta and gamma. The alpha chain contains the guanine nucleotide binding site.

The protein localises to the cell projection. It is found in the cilium. Its subcellular location is the dendrite. Guanine nucleotide-binding proteins (G proteins) are involved as modulators or transducers in various transmembrane signaling systems. This specific G-alpha subunit plays an important role in olfaction and in cilia morphogenesis. Involved in chemotactic responses to attractants diacetyl, pyrazine, 2,4,5-trimethylthiazole, benzaldehyde, isoamyl alcohol, butanone and 2,3-pentanedione. Displays a redundant function with gpa-3 in chemotactic responses. Involved in avoidance responses to copper, sodium dodecyl sulfate and linoleic acid. Involved in osmotic avoidance and mechanosensory responses. Involved in specifying fan-like morphology of cilia of head sensory neurons AWC. The chain is Guanine nucleotide-binding protein alpha-17 subunit (odr-3) from Caenorhabditis briggsae.